Consider the following 297-residue polypeptide: uncharacterized protein (297 aa).

The HTH lysR-type domain occupies 1 to 60 (MNIELRHLRYFVAVAEELHFGRAAARLNISQPPLSQQIQALEQQIGARLLARTNRSVLLT). Positions 20–40 (FGRAAARLNISQPPLSQQIQA) form a DNA-binding region, H-T-H motif.

This sequence belongs to the LysR transcriptional regulatory family.

This is an uncharacterized protein from Escherichia coli (strain K12).